Here is a 107-residue protein sequence, read N- to C-terminus: Large ribosomal subunit protein eL33B (107 aa).

An N-acetylalanine; partial modification is found at Ala-2. A Glycyl lysine isopeptide (Lys-Gly) (interchain with G-Cter in ubiquitin) cross-link involves residue Lys-47.

Belongs to the eukaryotic ribosomal protein eL33 family. In terms of assembly, component of the large ribosomal subunit (LSU). Mature yeast ribosomes consist of a small (40S) and a large (60S) subunit. The 40S small subunit contains 1 molecule of ribosomal RNA (18S rRNA) and 33 different proteins (encoded by 57 genes). The large 60S subunit contains 3 rRNA molecules (25S, 5.8S and 5S rRNA) and 46 different proteins (encoded by 81 genes). Post-translationally, N-terminally acetylated by acetyltransferase NatA.

Its subcellular location is the cytoplasm. Its function is as follows. Component of the ribosome, a large ribonucleoprotein complex responsible for the synthesis of proteins in the cell. The small ribosomal subunit (SSU) binds messenger RNAs (mRNAs) and translates the encoded message by selecting cognate aminoacyl-transfer RNA (tRNA) molecules. The large subunit (LSU) contains the ribosomal catalytic site termed the peptidyl transferase center (PTC), which catalyzes the formation of peptide bonds, thereby polymerizing the amino acids delivered by tRNAs into a polypeptide chain. The nascent polypeptides leave the ribosome through a tunnel in the LSU and interact with protein factors that function in enzymatic processing, targeting, and the membrane insertion of nascent chains at the exit of the ribosomal tunnel. This Saccharomyces cerevisiae (strain ATCC 204508 / S288c) (Baker's yeast) protein is Large ribosomal subunit protein eL33B.